The following is a 264-amino-acid chain: Thymidylate synthase (264 aa).

Arg21 provides a ligand contact to dUMP. His51 serves as a coordination point for (6R)-5,10-methylene-5,6,7,8-tetrahydrofolate. 126-127 (RR) lines the dUMP pocket. Cys146 functions as the Nucleophile in the catalytic mechanism. DUMP-binding positions include 166-169 (RSAD), Asn177, and 207-209 (HLY). Residue Asp169 coordinates (6R)-5,10-methylene-5,6,7,8-tetrahydrofolate. Ala263 serves as a coordination point for (6R)-5,10-methylene-5,6,7,8-tetrahydrofolate.

The protein belongs to the thymidylate synthase family. Bacterial-type ThyA subfamily. Homodimer.

Its subcellular location is the cytoplasm. It catalyses the reaction dUMP + (6R)-5,10-methylene-5,6,7,8-tetrahydrofolate = 7,8-dihydrofolate + dTMP. The protein operates within pyrimidine metabolism; dTTP biosynthesis. In terms of biological role, catalyzes the reductive methylation of 2'-deoxyuridine-5'-monophosphate (dUMP) to 2'-deoxythymidine-5'-monophosphate (dTMP) while utilizing 5,10-methylenetetrahydrofolate (mTHF) as the methyl donor and reductant in the reaction, yielding dihydrofolate (DHF) as a by-product. This enzymatic reaction provides an intracellular de novo source of dTMP, an essential precursor for DNA biosynthesis. This chain is Thymidylate synthase, found in Legionella pneumophila (strain Paris).